A 378-amino-acid polypeptide reads, in one-letter code: Copper-containing nitrite reductase (378 aa).

Positions 1 to 38 (MTEQLQMTRRTMLAGAALAGAVAPLLHTAQAHAAGAAA) form a signal peptide, tat-type signal. 2 consecutive Plastocyanin-like domains span residues 39–213 (AAGA…YDKI) and 214–378 (YYVG…PASM). Residues His133, His138, His173, Cys174, His183, Met188, and His344 each contribute to the Cu cation site.

The protein belongs to the multicopper oxidase family. Homotrimer. It depends on Cu(+) as a cofactor. Cu(2+) is required as a cofactor. FAD serves as cofactor. Post-translationally, predicted to be exported by the Tat system. The position of the signal peptide cleavage has been experimentally proven.

The protein resides in the periplasm. It carries out the reaction nitric oxide + Fe(III)-[cytochrome c] + H2O = Fe(II)-[cytochrome c] + nitrite + 2 H(+). Its pathway is nitrogen metabolism; nitrate reduction (denitrification); dinitrogen from nitrate: step 2/4. This is Copper-containing nitrite reductase (nirK) from Achromobacter cycloclastes.